The primary structure comprises 260 residues: uncharacterized protein (260 aa).

The signal sequence occupies residues 1–22 (MGYSKRFALYISILILIVMVAG). Cys-23 carries N-palmitoyl cysteine lipidation. Cys-23 carries S-diacylglycerol cysteine lipidation.

This sequence belongs to the staphylococcal tandem lipoprotein family.

It is found in the cell membrane. This is an uncharacterized protein from Staphylococcus aureus (strain N315).